A 469-amino-acid chain; its full sequence is ATP-dependent protease ATPase subunit HslU (469 aa).

Residues Ile-21, 63–68 (GVGKTE), Asp-282, Glu-347, and Arg-419 each bind ATP.

The protein belongs to the ClpX chaperone family. HslU subfamily. A double ring-shaped homohexamer of HslV is capped on each side by a ring-shaped HslU homohexamer. The assembly of the HslU/HslV complex is dependent on binding of ATP.

The protein localises to the cytoplasm. ATPase subunit of a proteasome-like degradation complex; this subunit has chaperone activity. The binding of ATP and its subsequent hydrolysis by HslU are essential for unfolding of protein substrates subsequently hydrolyzed by HslV. HslU recognizes the N-terminal part of its protein substrates and unfolds these before they are guided to HslV for hydrolysis. The polypeptide is ATP-dependent protease ATPase subunit HslU (Petrotoga mobilis (strain DSM 10674 / SJ95)).